The sequence spans 221 residues: uncharacterized protein (221 aa).

The 135-residue stretch at 33 to 167 (RPAKSAVMLY…VSPGANLELL (135 aa)) folds into the MOSC domain.

This is an uncharacterized protein from Bacillus subtilis (strain 168).